We begin with the raw amino-acid sequence, 804 residues long: Tegument protein UL47 homolog (804 aa).

Positions 1–15 (MQSGHYNRRQSRRQR) are enriched in basic residues. Disordered stretches follow at residues 1-42 (MQSG…THPP) and 58-206 (LNSE…DYFS). The short motif at 11-31 (SRRQRISSNTTDSPRHTHGTR) is the Nuclear localization signal element. Over residues 32-42 (YRSTNWYTHPP) the composition is skewed to polar residues. Residues 62–72 (MDQDSSSDASD) are compositionally biased toward acidic residues. Residues 82–93 (STYNGSEQNTST) are compositionally biased toward polar residues. Over residues 94 to 109 (SRHENRIFKLTEREAN) the composition is skewed to basic and acidic residues. A run of 3 repeats spans residues 117–132 (DAIDDEGEAEEGEAEE), 133–148 (DAIDDEGEAEEGEAEE), and 149–164 (DAIDDEGEAEEGEAEE). Positions 117–203 (DAIDDEGEAE…IDDEGEAEED (87 aa)) are 6 X 16 AA approximate tandem repeats. The span at 118–204 (AIDDEGEAEE…DDEGEAEEDY (87 aa)) shows a compositional bias: acidic residues. The stretch at 170–180 (DAIDDEGEAEE) is one 1-4; truncated repeat. Residues 181–191 (DAIDDEGEAEE) form a 1-5; truncated repeat. The stretch at 192–203 (DAIDDEGEAEED) is one 1-6; truncated repeat. Residues 770-792 (QPIPSVDLAENLMQYRNEILGLD) carry the Nuclear export signal motif.

This sequence belongs to the alphaherpesvirinae HHV-1 UL47 family. In terms of assembly, interacts with US3 kinase. Interacts with ORF24 and ORF27; these interactions seem important for efficient virion nuclear egress. Interacts with ORF17/VHS. Post-translationally, phosphorylated by US3. This phosphorylation is required for proper nuclear localization.

It localises to the virion tegument. The protein resides in the host nucleus. The protein localises to the host cytoplasm. Its function is as follows. Tegument protein that can bind to various RNA transcripts. Plays a role in the attenuation of selective viral and cellular mRNA degradation by modulating the activity of host shutoff RNase ORF17/VHS. Also plays a role in the primary envelopment of virions in the perinuclear space, probably by interacting with two nuclear egress proteins ORF24 and ORF27. This is Tegument protein UL47 homolog from Varicella-zoster virus (strain Oka vaccine) (HHV-3).